The sequence spans 89 residues: HssA/B-like protein DDB_G0295685 (89 aa).

Belongs to the hssA/B family.

In Dictyostelium discoideum (Social amoeba), this protein is HssA/B-like protein DDB_G0295685.